Consider the following 119-residue polypeptide: Large ribosomal subunit protein bL20 (119 aa).

The protein belongs to the bacterial ribosomal protein bL20 family.

Functionally, binds directly to 23S ribosomal RNA and is necessary for the in vitro assembly process of the 50S ribosomal subunit. It is not involved in the protein synthesizing functions of that subunit. In Dehalococcoides mccartyi (strain ATCC BAA-2100 / JCM 16839 / KCTC 5957 / BAV1), this protein is Large ribosomal subunit protein bL20.